A 102-amino-acid chain; its full sequence is Aspartyl/glutamyl-tRNA(Asn/Gln) amidotransferase subunit C (102 aa).

The protein belongs to the GatC family. Heterotrimer of A, B and C subunits.

It carries out the reaction L-glutamyl-tRNA(Gln) + L-glutamine + ATP + H2O = L-glutaminyl-tRNA(Gln) + L-glutamate + ADP + phosphate + H(+). It catalyses the reaction L-aspartyl-tRNA(Asn) + L-glutamine + ATP + H2O = L-asparaginyl-tRNA(Asn) + L-glutamate + ADP + phosphate + 2 H(+). In terms of biological role, allows the formation of correctly charged Asn-tRNA(Asn) or Gln-tRNA(Gln) through the transamidation of misacylated Asp-tRNA(Asn) or Glu-tRNA(Gln) in organisms which lack either or both of asparaginyl-tRNA or glutaminyl-tRNA synthetases. The reaction takes place in the presence of glutamine and ATP through an activated phospho-Asp-tRNA(Asn) or phospho-Glu-tRNA(Gln). This Mycobacteroides abscessus (strain ATCC 19977 / DSM 44196 / CCUG 20993 / CIP 104536 / JCM 13569 / NCTC 13031 / TMC 1543 / L948) (Mycobacterium abscessus) protein is Aspartyl/glutamyl-tRNA(Asn/Gln) amidotransferase subunit C.